The following is a 162-amino-acid chain: Meiosis-specific protein HED1 (162 aa).

The disordered stretch occupies residues 67–124 (KNLSENTGGGSPNGGAYLDAKKGVREQDQYQGGPSKELDRLQPPPSMKKSPPRKKKSL). Basic and acidic residues predominate over residues 85 to 94 (DAKKGVREQD).

Interacts with RAD51.

The protein resides in the nucleus. The protein localises to the chromosome. Involved in regulation of meiotic recombination and repair of DNA damage. Inhibits RAD51-mediated recombination when the meiotic recombination machinery is impaired. This Saccharomyces cerevisiae (strain ATCC 204508 / S288c) (Baker's yeast) protein is Meiosis-specific protein HED1 (HED1).